We begin with the raw amino-acid sequence, 349 residues long: MTNQHSAPLTYRDAGVDIDAGDALVDRIKPLAARTMRPGVLVGIGGFGALFEVPKKFREPVLVSGTDGVGTKLRLAFDWNRHDTVGIDLVAMSVNDILVQGAEPLYFLDYFACGKLSVDTAAAVVGGIARGCELAGCALIGGETAEMPGMYPDGEYDLAGFAVGAVDKSAIIDGKSIQPGDVVLGLASSGAHSNGYSLVRKILERAGARPDQDFHGQPLVDVVMAPTRIYVKQVLAALDRHGPAIKGLAHITGGGLLDNVPRILQPGMAAQLQRDGWEMPKLFQWLQQQGSVADAEMHRVFNCGIGMVLVVAADQADAVAATLREQGEIVNRIGEIVPQQDGMAQTVVV.

Belongs to the AIR synthase family.

It is found in the cytoplasm. The enzyme catalyses 2-formamido-N(1)-(5-O-phospho-beta-D-ribosyl)acetamidine + ATP = 5-amino-1-(5-phospho-beta-D-ribosyl)imidazole + ADP + phosphate + H(+). The protein operates within purine metabolism; IMP biosynthesis via de novo pathway; 5-amino-1-(5-phospho-D-ribosyl)imidazole from N(2)-formyl-N(1)-(5-phospho-D-ribosyl)glycinamide: step 2/2. The polypeptide is Phosphoribosylformylglycinamidine cyclo-ligase (Bordetella parapertussis (strain 12822 / ATCC BAA-587 / NCTC 13253)).